The sequence spans 139 residues: Large-conductance mechanosensitive channel (139 aa).

The next 2 helical transmembrane spans lie at 9–29 (AFAVKGNVVDMAVGIIIGAAF) and 79–99 (IQTVIDFVIVAFAIFMGVKAI).

Belongs to the MscL family. As to quaternary structure, homopentamer.

It is found in the cell inner membrane. Channel that opens in response to stretch forces in the membrane lipid bilayer. May participate in the regulation of osmotic pressure changes within the cell. This chain is Large-conductance mechanosensitive channel, found in Pseudomonas putida (strain ATCC 47054 / DSM 6125 / CFBP 8728 / NCIMB 11950 / KT2440).